A 446-amino-acid chain; its full sequence is Peptide chain release factor 1, mitochondrial (446 aa).

The transit peptide at 1-62 directs the protein to the mitochondrion; it reads MSHHLCIWLF…LLNKSWSRGC (62 aa). The segment at 298–362 is GGQ domain; the sequence is PKDLRVDTFR…LRARLYQQII (65 aa). A GGQ motif is present at residues 312–314; it reads GGQ. Q314 bears the N5-methylglutamine mark.

This sequence belongs to the prokaryotic/mitochondrial release factor family. In terms of processing, methylation of glutamine in the GGQ triplet by HEMK1 is conserved from bacteria to mammals.

The protein resides in the mitochondrion. In terms of biological role, mitochondrial peptide chain release factor that directs the termination of translation in response to the peptide chain non-canonical stop codons AGG and AGA. Non-canonical termination codons AGG and AGA are found at the end of MT-CO1/COX1 and MT-ND6/ND6 open reading frames, respectively. Recognizes non-canonical stop codons via a network of interactions between the codon, MTRF1 and the ribosomal RNA (rRNA): in contrast to other translation release factors, which identify the codon in the A-site via direct interactions of amino acid side chains with the bases, MTRF1 repositions the first 2 bases of the stop codon to use an intricate network of interactions that includes residues of the release factor, the rRNA of the small ribosomal subunit, as well as neighboring bases of the mRNA. This Mus musculus (Mouse) protein is Peptide chain release factor 1, mitochondrial.